The chain runs to 439 residues: Eukaryotic translation initiation factor 2 subunit gamma (439 aa).

Positions Gln11–Val215 constitute a tr-type G domain. The interval Gly20–Ser27 is G1. Ala23–Thr28 is a binding site for GTP. The tract at residues Asn48–Lys52 is G2. The interval Asp103–Gly106 is G3. GTP-binding positions include Asn159–Asp162 and Ala193–Gln195. The interval Asn159–Asp162 is G4. Positions Ala193–Gln195 are G5. An interacts with CDC123 region spans residues Gly415–Tyr427.

The protein belongs to the TRAFAC class translation factor GTPase superfamily. Classic translation factor GTPase family. EIF2G subfamily. As to quaternary structure, eukaryotic translation initiation factor 2 eIF2 is a heterotrimeric complex composed of an alpha, a beta and a gamma subunit. The factors eIF-1, eIF-2, eIF-3, TIF5/eIF-5 and methionyl-tRNAi form a multifactor complex (MFC) that may bind to the 40S ribosome.

The protein resides in the cytoplasm. It localises to the cytosol. It carries out the reaction GTP + H2O = GDP + phosphate + H(+). Its function is as follows. As a subunit of eukaryotic initiation factor 2 eIF2, involved in the early steps of protein synthesis. In the presence of GTP, eIF-2 forms a ternary complex with initiator tRNA Met-tRNAi and then recruits the 40S ribosomal complex and initiation factors eIF-1, eIF-1A and eIF-3 to form the 43S pre-initiation complex (43S PIC), a step that determines the rate of protein translation. The 43S PIC binds to mRNA and scans downstream to the initiation codon, where it forms a 48S initiation complex by codon-anticodon base pairing. This leads to the displacement of eIF-1 to allow GTPase-activating protein (GAP) eIF-5-mediated hydrolysis of eIF2-bound GTP. Hydrolysis of GTP and release of Pi, which makes GTP hydrolysis irreversible, causes the release of the eIF-2-GDP binary complex from the 40S subunit, an event that is essential for the subsequent joining of the 60S ribosomal subunit to form an elongation-competent 80S ribosome. In order for eIF-2 to recycle and catalyze another round of initiation, the GDP bound to eIF-2 must be exchanged with GTP by way of a reaction catalyzed by GDP-GTP exchange factor (GEF) eIF-2B. The protein is Eukaryotic translation initiation factor 2 subunit gamma of Encephalitozoon cuniculi (strain GB-M1) (Microsporidian parasite).